We begin with the raw amino-acid sequence, 324 residues long: Mevalonate-3-kinase (324 aa).

Leucine 19 serves as a coordination point for substrate. An ATP-binding site is contributed by 109 to 112 (SGSS). Substrate is bound by residues glutamate 145 and arginine 149. The ATP site is built by arginine 190 and serine 193.

It belongs to the GHMP kinase family. As to quaternary structure, homodimer.

It catalyses the reaction (R)-mevalonate + ATP = (R)-3-phosphomevalonate + ADP + H(+). It participates in isoprenoid biosynthesis; isopentenyl diphosphate biosynthesis via mevalonate pathway. In terms of biological role, catalyzes the phosphorylation of mevalonate (MVA) to yield mevalonate-3-phosphate. Functions in an alternative mevalonate pathway, which passes through mevalonate 3-phosphate rather than mevalonate 5-phosphate. Also able to catalyze the formation of isobutene via the conversion of 3-hydroxyisovalerate (3-HIV) to an unstable 3-phosphate intermediate that undergoes a spontaneous decarboxylation. The sequence is that of Mevalonate-3-kinase from Picrophilus torridus (strain ATCC 700027 / DSM 9790 / JCM 10055 / NBRC 100828 / KAW 2/3).